Reading from the N-terminus, the 101-residue chain is Large ribosomal subunit protein uL24 (101 aa).

Belongs to the universal ribosomal protein uL24 family. As to quaternary structure, part of the 50S ribosomal subunit.

In terms of biological role, one of two assembly initiator proteins, it binds directly to the 5'-end of the 23S rRNA, where it nucleates assembly of the 50S subunit. One of the proteins that surrounds the polypeptide exit tunnel on the outside of the subunit. The protein is Large ribosomal subunit protein uL24 of Borrelia turicatae (strain 91E135).